The sequence spans 156 residues: Small ribosomal subunit protein uS7 (156 aa).

Belongs to the universal ribosomal protein uS7 family. In terms of assembly, part of the 30S ribosomal subunit. Contacts proteins S9 and S11.

In terms of biological role, one of the primary rRNA binding proteins, it binds directly to 16S rRNA where it nucleates assembly of the head domain of the 30S subunit. Is located at the subunit interface close to the decoding center, probably blocks exit of the E-site tRNA. The chain is Small ribosomal subunit protein uS7 from Lactobacillus acidophilus (strain ATCC 700396 / NCK56 / N2 / NCFM).